We begin with the raw amino-acid sequence, 158 residues long: MSLIPSFFGGRRSNVFDPFSLDVWDPFKDFPFNNSALSASFPRENSAFVSTRVDWKETPEAHVFKADLPGMKKEEVKVEIEDDRVLQISGERSVEKEDKNDQWHRLERSSGKFMRRFRLPENAKMDQVKAAMENGVLTVTVPKEEVKKPEVKTIDISG.

The 115-residue stretch at 44 to 158 (ENSAFVSTRV…PEVKTIDISG (115 aa)) folds into the sHSP domain.

The protein belongs to the small heat shock protein (HSP20) family. As to quaternary structure, forms oligomeric structures.

The protein resides in the cytoplasm. The chain is 18.2 kDa class I heat shock protein (HSP18.2) from Medicago sativa (Alfalfa).